The following is a 396-amino-acid chain: Putative cyclin-B3-1 (396 aa).

The tract at residues 1–98 (MLRDGNKQSK…KVLDVTAKPK (98 aa)) is disordered. Residues 21–32 (KTTVKTSLQNRS) are compositionally biased toward polar residues. The span at 39–57 (VGRSKSRSISSIPSSAVAS) shows a compositional bias: low complexity. Over residues 76-85 (GESSSSGNKD) the composition is skewed to polar residues.

This sequence belongs to the cyclin family. Cyclin AB subfamily.

In Arabidopsis thaliana (Mouse-ear cress), this protein is Putative cyclin-B3-1 (CYCB3-1).